A 556-amino-acid chain; its full sequence is Formate--tetrahydrofolate ligase (556 aa).

Thr65–Ser72 serves as a coordination point for ATP.

It belongs to the formate--tetrahydrofolate ligase family.

It carries out the reaction (6S)-5,6,7,8-tetrahydrofolate + formate + ATP = (6R)-10-formyltetrahydrofolate + ADP + phosphate. Its pathway is one-carbon metabolism; tetrahydrofolate interconversion. In Streptococcus agalactiae serotype III (strain NEM316), this protein is Formate--tetrahydrofolate ligase.